Here is a 1233-residue protein sequence, read N- to C-terminus: Anion exchange protein 3 (1233 aa).

Positions 1-11 (MANGVIPPPGG) are enriched in pro residues. Disordered regions lie at residues 1–320 (MANG…RRPH) and 431–500 (DDKD…DGHR). The Cytoplasmic segment spans residues 1 to 709 (MANGVIPPPG…DLRDALHSQC (709 aa)). Residues 58–73 (DPEKPSRSFSERDFAF) are compositionally biased toward basic and acidic residues. 2 stretches are compositionally biased toward basic residues: residues 74–97 (HRHISHHTHHPLSARLPPPHKLRR) and 104–113 (RHTRRKRKKE). Acidic residues predominate over residues 137-153 (GEEEEEEEEEGESETEA). Phosphoserine occurs at positions 168, 171, 176, and 199. Low complexity predominate over residues 201 to 216 (QRSVSSSSPRARAPRV). The span at 268-290 (DDMKSHRLEDNPGVRRHLVKEPS) shows a compositional bias: basic and acidic residues. Omega-N-methylarginine is present on R296. A compositionally biased stretch (low complexity) spans 437–450 (SFPRNPSSSSVNSV). Residues 482–500 (HDPDAKERPLHMPGGDGHR) show a composition bias toward basic and acidic residues. Transmembrane regions (helical) follow at residues 710–732 (VAAVLFIYFAALSPAITFGGLLG), 738–775 (LMGVSELIVSTAVLGVLFSLLGAQPLLVVGFSGPLLVF), 795–817 (VWVGLWLVVFVLALVGAEGTFLV), and 827–848 (IFAFLISLIFIYETFHKLYKVF). The tract at residues 710–1233 (VAAVLFIYFA…DEYNELHMPV (524 aa)) is membrane (anion exchange). N-linked (GlcNAc...) asparagine glycosylation is present at N874. The chain crosses the membrane as a helical span at residues 894 to 911 (ALLSLILMLGTFLIAFFL). Residues 912–926 (RKFRNSRFLGGKARR) are Cytoplasmic-facing. 5 consecutive transmembrane segments (helical) span residues 927–947 (IIGDFGIPISILLMVLVDYSI), 981–1003 (PFPPWMMVAAAVPALLVLILIFM), 1029–1050 (LLLIGSLGGLCGLFGLPWLTAA), 1084–1129 (VTGV…IQLS), and 1156–1192 (MHLFTCIQLACIALLWVVKSTAASLAFPFLLLLTVPL). C1166 is lipidated: S-palmitoyl cysteine.

The protein belongs to the anion exchanger (TC 2.A.31) family.

Its subcellular location is the cell membrane. It carries out the reaction hydrogencarbonate(in) + chloride(out) = hydrogencarbonate(out) + chloride(in). Sodium-independent anion exchanger which mediates the electroneutral exchange of chloride for bicarbonate ions across the cell membrane. May be involved in the regulation of intracellular pH, and the modulation of cardiac action potential. The protein is Anion exchange protein 3 (SLC4A3) of Oryctolagus cuniculus (Rabbit).